Reading from the N-terminus, the 105-residue chain is U21-theraphotoxin-Cg1a 4 (105 aa).

An N-terminal signal peptide occupies residues 1 to 21; sequence MKVSVLITLAVLGVMFLLTSA. A propeptide spanning residues 22-48 is cleaved from the precursor; sequence EERGSDQMDSPAWLKSMEIIFQSEERE. Disulfide bonds link Cys49-Cys63, Cys56-Cys68, and Cys62-Cys76. At Val82 the chain carries Valine amide. The propeptide occupies 83 to 105; the sequence is GKWEMLINMNIFRIVFSYSMCTV.

The protein belongs to the neurotoxin 10 (Hwtx-1) family. 05 (F4a) subfamily. Expressed by the venom gland.

The protein resides in the secreted. Its function is as follows. Probable ion channel inhibitor. This chain is U21-theraphotoxin-Cg1a 4, found in Chilobrachys guangxiensis (Chinese earth tiger tarantula).